The following is a 197-amino-acid chain: 3-isopropylmalate dehydratase small subunit (197 aa).

It belongs to the LeuD family. LeuD type 1 subfamily. In terms of assembly, heterodimer of LeuC and LeuD.

It catalyses the reaction (2R,3S)-3-isopropylmalate = (2S)-2-isopropylmalate. Its pathway is amino-acid biosynthesis; L-leucine biosynthesis; L-leucine from 3-methyl-2-oxobutanoate: step 2/4. In terms of biological role, catalyzes the isomerization between 2-isopropylmalate and 3-isopropylmalate, via the formation of 2-isopropylmaleate. In Streptomyces avermitilis (strain ATCC 31267 / DSM 46492 / JCM 5070 / NBRC 14893 / NCIMB 12804 / NRRL 8165 / MA-4680), this protein is 3-isopropylmalate dehydratase small subunit.